The sequence spans 252 residues: Triosephosphate isomerase (252 aa).

Residue 10 to 12 participates in substrate binding; it reads NWK. Histidine 96 acts as the Electrophile in catalysis. Glutamate 168 serves as the catalytic Proton acceptor. Substrate is bound by residues glycine 174, serine 214, and 235–236; that span reads GG.

The protein belongs to the triosephosphate isomerase family. As to quaternary structure, homodimer.

The protein localises to the cytoplasm. The enzyme catalyses D-glyceraldehyde 3-phosphate = dihydroxyacetone phosphate. It functions in the pathway carbohydrate biosynthesis; gluconeogenesis. Its pathway is carbohydrate degradation; glycolysis; D-glyceraldehyde 3-phosphate from glycerone phosphate: step 1/1. Its function is as follows. Involved in the gluconeogenesis. Catalyzes stereospecifically the conversion of dihydroxyacetone phosphate (DHAP) to D-glyceraldehyde-3-phosphate (G3P). The chain is Triosephosphate isomerase from Lactobacillus acidophilus (strain ATCC 700396 / NCK56 / N2 / NCFM).